Consider the following 227-residue polypeptide: Enolase-phosphatase E1 (227 aa).

Mg(2+)-binding residues include aspartate 11 and glutamate 13. Substrate is bound by residues 118–119 (SS) and lysine 161. Aspartate 186 contributes to the Mg(2+) binding site.

This sequence belongs to the HAD-like hydrolase superfamily. MasA/MtnC family. As to quaternary structure, monomer. Mg(2+) serves as cofactor.

Its subcellular location is the cytoplasm. It localises to the nucleus. It catalyses the reaction 5-methylsulfanyl-2,3-dioxopentyl phosphate + H2O = 1,2-dihydroxy-5-(methylsulfanyl)pent-1-en-3-one + phosphate. Its pathway is amino-acid biosynthesis; L-methionine biosynthesis via salvage pathway; L-methionine from S-methyl-5-thio-alpha-D-ribose 1-phosphate: step 3/6. The protein operates within amino-acid biosynthesis; L-methionine biosynthesis via salvage pathway; L-methionine from S-methyl-5-thio-alpha-D-ribose 1-phosphate: step 4/6. Its function is as follows. Bifunctional enzyme that catalyzes the enolization of 2,3-diketo-5-methylthiopentyl-1-phosphate (DK-MTP-1-P) into the intermediate 2-hydroxy-3-keto-5-methylthiopentenyl-1-phosphate (HK-MTPenyl-1-P), which is then dephosphorylated to form the acireductone 1,2-dihydroxy-3-keto-5-methylthiopentene (DHK-MTPene). This is Enolase-phosphatase E1 from Saccharomyces cerevisiae (strain RM11-1a) (Baker's yeast).